The primary structure comprises 588 residues: Adenine deaminase (588 aa).

It belongs to the metallo-dependent hydrolases superfamily. Adenine deaminase family. As to quaternary structure, homodimer. It depends on Mn(2+) as a cofactor.

It catalyses the reaction adenine + H2O + H(+) = hypoxanthine + NH4(+). This Escherichia coli O17:K52:H18 (strain UMN026 / ExPEC) protein is Adenine deaminase.